The sequence spans 150 residues: 3-dehydroquinate dehydratase (150 aa).

The Proton acceptor role is filled by tyrosine 26. Substrate is bound by residues asparagine 77, histidine 83, and aspartate 90. The active-site Proton donor is histidine 103. Substrate is bound by residues 104-105 (LS) and arginine 114.

The protein belongs to the type-II 3-dehydroquinase family. In terms of assembly, homododecamer.

The enzyme catalyses 3-dehydroquinate = 3-dehydroshikimate + H2O. It participates in metabolic intermediate biosynthesis; chorismate biosynthesis; chorismate from D-erythrose 4-phosphate and phosphoenolpyruvate: step 3/7. In terms of biological role, catalyzes a trans-dehydration via an enolate intermediate. The polypeptide is 3-dehydroquinate dehydratase (Pectobacterium atrosepticum (strain SCRI 1043 / ATCC BAA-672) (Erwinia carotovora subsp. atroseptica)).